The chain runs to 181 residues: Peptide deformylase (181 aa).

2 residues coordinate Fe cation: Cys104 and His146. Residue Glu147 is part of the active site. His150 is a binding site for Fe cation.

Belongs to the polypeptide deformylase family. It depends on Fe(2+) as a cofactor.

The enzyme catalyses N-terminal N-formyl-L-methionyl-[peptide] + H2O = N-terminal L-methionyl-[peptide] + formate. Removes the formyl group from the N-terminal Met of newly synthesized proteins. Requires at least a dipeptide for an efficient rate of reaction. N-terminal L-methionine is a prerequisite for activity but the enzyme has broad specificity at other positions. The protein is Peptide deformylase of Helicobacter hepaticus (strain ATCC 51449 / 3B1).